Here is a 967-residue protein sequence, read N- to C-terminus: Serine/threonine-protein kinase/endoribonuclease ire-1 (967 aa).

Positions 1–21 are cleaved as a signal peptide; sequence MRATFHLFTFIFLLLFSSVIC. Residues 22-438 are Lumenal-facing; that stretch reads ISTPGFRNDH…LLLLNNHPIP (417 aa). Residues Asn-100 and Asn-188 are each glycosylated (N-linked (GlcNAc...) asparagine). Residues 439 to 455 form a helical membrane-spanning segment; it reads FYATLVTMFALLLTVIW. The Cytoplasmic segment spans residues 456-967; it reads QCGRQWDQQK…IKKKSNPNTD (512 aa). The interval 474-494 is disordered; it reads EIVNNPGESRSAQTSKQSNRG. Positions 479-494 are enriched in polar residues; it reads PGESRSAQTSKQSNRG. Residues 518–778 enclose the Protein kinase domain; that stretch reads YSPSDILGTG…ADAVLNHPFF (261 aa). ATP is bound by residues 524–532 and Lys-546; that span reads LGTGCEGTV. Asp-636 serves as the catalytic Proton acceptor. Ser-672 is modified (phosphoserine; by autocatalysis). The 129-residue stretch at 781 to 909 folds into the KEN domain; sequence SEKRLAYFSD…EAVFKRYYSD (129 aa). Positions 948-967 are disordered; that stretch reads RTPLKLDKRNIKKKSNPNTD. Basic residues predominate over residues 957 to 967; that stretch reads NIKKKSNPNTD.

The protein belongs to the protein kinase superfamily. Ser/Thr protein kinase family. Mg(2+) is required as a cofactor. Post-translationally, autophosphorylated mainly on serine residues.

It localises to the endoplasmic reticulum membrane. It carries out the reaction L-seryl-[protein] + ATP = O-phospho-L-seryl-[protein] + ADP + H(+). The enzyme catalyses L-threonyl-[protein] + ATP = O-phospho-L-threonyl-[protein] + ADP + H(+). The kinase domain is activated by trans-autophosphorylation. Kinase activity is required for activation of the endoribonuclease domain. Functionally, senses unfolded proteins in the lumen of the endoplasmic reticulum via its N-terminal domain which leads to enzyme auto-activation. The active endoribonuclease domain splices xbp-1 precursor mRNA to produce the mature form which then induces transcription of UPR target genes. Unfolded protein response (UPR) transcriptional activation by ire-1, as well as translational attenuation by pek-1 in a complementary pathway, maintains ER homeostasis. Regulates the transcriptional up-regulation of nucleoside-diphosphatase apy-1 and many other genes, upon ER stress. By activating the UPR pathway during non-lethal hypoxia pre-conditioning, confers adaptive protection to subsequent exposure to hypoxia. ire-1 and pek-1 are redundant genes that control a pathway essential for larval development and survival. Plays a role in the nuclear retention of unspliced mRNAs. This chain is Serine/threonine-protein kinase/endoribonuclease ire-1, found in Caenorhabditis elegans.